Reading from the N-terminus, the 1284-residue chain is Integrator complex subunit 6 (1284 aa).

One can recognise a VWFA domain in the interval 3-134 (IILFLVDTSS…PSVIIVITDG (132 aa)). Disordered regions lie at residues 653–824 (DVAP…GMSN), 864–895 (ETGETEAVPGGASLPGASSANEPSSIGASPAV), 1053–1086 (TSSGSSVGAGASNSNLNGNGSTESGGGVSSDDHA), and 1125–1180 (NNSS…PGQS). Gly residues predominate over residues 690 to 721 (SPGGGSGPGMPGMPGMGGGMSGLMLGAGGSGG). 2 stretches are compositionally biased toward low complexity: residues 752-781 (DSRSSSSGSESSTTGSAPGSPIPGATSSIS) and 803-824 (NSNSSFVSSTSEASASDSGMSN). Residues 879–890 (GASSANEPSSIG) show a composition bias toward polar residues. 2 stretches are compositionally biased toward low complexity: residues 1053–1074 (TSSGSSVGAGASNSNLNGNGST) and 1125–1141 (NNSSAAGAASGSTLSNN). Over residues 1159-1171 (INSSCGSSPTHNN) the composition is skewed to polar residues.

It belongs to the Integrator subunit 6 family. As to quaternary structure, belongs to the multiprotein complex Integrator, at least composed of IntS1, IntS2, IntS3, IntS4, omd/IntS5, IntS6, defl/IntS7, IntS8, IntS9, IntS10, IntS11, IntS12, asun/IntS13, IntS14 and IntS15. The core complex associates with protein phosphatase 2A subunits mts/PP2A and Pp2A-29B, to form the Integrator-PP2A (INTAC) complex.

Its subcellular location is the nucleus. Component of the integrator complex, a multiprotein complex that terminates RNA polymerase II (Pol II) transcription in the promoter-proximal region of genes. The integrator complex provides a quality checkpoint during transcription elongation by driving premature transcription termination of transcripts that are unfavorably configured for transcriptional elongation: the complex terminates transcription by (1) catalyzing dephosphorylation of the C-terminal domain (CTD) of Pol II subunit Polr2A/Rbp1 and Spt5, and (2) degrading the exiting nascent RNA transcript via endonuclease activity. The integrator complex is also involved in the 3'-end processing of the U7 snRNA, and also the spliceosomal snRNAs U1, U2, U4 and U5. Within the integrator complex, IntS6 acts as a substrate adapter for protein phosphatase 2A (PP2A). This Drosophila melanogaster (Fruit fly) protein is Integrator complex subunit 6.